The following is a 517-amino-acid chain: 2,4,6-trichlorophenol monooxygenase (517 aa).

The protein belongs to the FADH(2)-utilizing monooxygenase family. Homotetramer in solution.

The enzyme catalyses 2,4,6-trichlorophenol + FADH2 + O2 = 2-chloro-6-hydroxy-1,4-benzoquinone + FAD + 2 chloride + 3 H(+). The catalysed reaction is 2,4,6-trichlorophenol + FADH2 + O2 = 2,6-dichlorobenzoquinone + FAD + chloride + H2O + H(+). It carries out the reaction 2,6-dichlorobenzoquinone + H2O = 2-chloro-6-hydroxy-1,4-benzoquinone + chloride + 2 H(+). Its pathway is aromatic compound metabolism. The protein operates within xenobiotic degradation. Functionally, involved in the degradation of 2,4,6-trichlorophenol (2,4,6-TCP). Catalyzes the conversion of 2,4,6-TCP to 6-chlorohydroxyquinol (6-CHQ). The monooxygenase oxidizes 2,4,6-TCP to 2,6-dichloroquinone (2,6-DCBQ), which remains with the enzyme and is hydrolyzed to 2-chlorohydroxyquinone. 2-chlorohydroxyquinone is chemically reduced by ascorbate and NADH to 6-chlorohydroxyquinol (6-CHQ). This chain is 2,4,6-trichlorophenol monooxygenase, found in Cupriavidus pinatubonensis (strain JMP 134 / LMG 1197) (Cupriavidus necator (strain JMP 134)).